The primary structure comprises 80 residues: Phycocyanin-645 alpha-1 chain (80 aa).

(2R,3E)-phycocyanobilin is bound at residue R16. Residues C18, Q24, Y25, and K40 each contribute to the mesobiliverdin site. Residues P71 and I73 each coordinate 15,16-dihydrobiliverdin.

Belongs to the phycoerythrin family. Heterotetramer of 2 different alpha chains and 2 identical beta chains which form 2 alpha-beta heterodimers within the heterotetramer. Post-translationally, contains one phycocyanobilin chromophore, one mesobiliverdin chromophore and one 15,16-dihydrobiliverdin chromophore with binding mediated by both the alpha and beta subunits.

The protein localises to the plastid. It is found in the chloroplast thylakoid membrane. In terms of biological role, light-harvesting photosynthetic tetrapyrrole chromophore-protein from the phycobiliprotein complex. In Chroomonas sp, this protein is Phycocyanin-645 alpha-1 chain.